Here is a 668-residue protein sequence, read N- to C-terminus: MEGPTHPKPSKDKTFSWDLIILVGVLLRLDAGMANPSPHQVYNITWTITNLVTGIKANATSMLGTLTDTFPTIYFDLCDIIGNTWNPSDQEPFPGYGCDQPMRRWQQRNTAFYVCPGHANRKQCGGPQDGFCAVWGCETTGETYWKPTSSWDYITVKKGVTQGIYQCNGGGWCGPCYDKAVHSSTTGASEGGRCNPLILQFTQKGRQTSWDGPKSWGLRLYRSGYDPIALFSVSRQVMTITPPQAMGPNPVLPDQKPPSRQSQIESRVIPHHPQGNGGTPGITLVNASIAPLSTPVTPASPKRIGTGNRLINLVQGTYLTLNVTNPNKTKDCWLCLVSRPPYYEGIAVLGNYSNQTNPPPSCLSVPQHKLTISEVSGQGLCIATVPKTHQALCNKTQKGHRGTHYLVAPNGTYWACNTGLTPCISMAVLNWTSDFCVLTELWPRITYHEPEYIYSHFENKPRFKRDPISLTVALMLGGITVGGMARNRNRDCGLLETAQFRQLQMAMHTDIQALEESISALEKSLTSLSEVVLQNRRGLDILFLQEGGLCTALKEECCFYADHTGLVRDNMAKLRERLKQRQQLFDSQQDGLEGWFNKSPWFTTLISSIMGPLMILLLILLFGPCILNRLVQFVKDRISVVQTLVLTQQYQRLGQWRLRPTVSPQLNV.

A signal peptide spans 1–34 (MEGPTHPKPSKDKTFSWDLIILVGVLLRLDAGMA). Residues 35–605 (NPSPHQVYNI…FNKSPWFTTL (571 aa)) are Extracellular-facing. 2 N-linked (GlcNAc...) asparagine; by host glycosylation sites follow: N43 and N58. Cystine bridges form between C115-C132 and C124-C137. The tract at residues 243–264 (PQAMGPNPVLPDQKPPSRQSQI) is disordered. 3 N-linked (GlcNAc...) asparagine; by host glycosylation sites follow: N286, N322, and N327. 3 disulfide bridges follow: C332–C335, C332–C558, and C550–C557. The CXXC signature appears at 332–335 (CWLC). N-linked (GlcNAc...) asparagine; by host glycosylation is found at N351, N354, N394, N410, and N430. Positions 467 to 487 (PISLTVALMLGGITVGGMARN) are fusion peptide. Coiled coils occupy residues 495–544 (LETA…ILFL) and 554–590 (KEEC…SQQD). Positions 533-549 (LQNRRGLDILFLQEGGL) are immunosuppression. Residues 550–558 (CTALKEECC) carry the CX6CC motif. The helical transmembrane segment at 606-626 (ISSIMGPLMILLLILLFGPCI) threads the bilayer. A lipid anchor (S-palmitoyl cysteine; by host) is attached at C625. The Cytoplasmic segment spans residues 627 to 668 (LNRLVQFVKDRISVVQTLVLTQQYQRLGQWRLRPTVSPQLNV). The YXXL motif; contains endocytosis signal motif lies at 650 to 653 (YQRL).

The mature envelope protein (Env) consists of a trimer of SU-TM heterodimers attached by a labile interchain disulfide bond. Specific enzymatic cleavages in vivo yield mature proteins. Envelope glycoproteins are synthesized as an inactive precursor that is N-glycosylated and processed likely by host cell furin or by a furin-like protease in the Golgi to yield the mature SU and TM proteins. The cleavage site between SU and TM requires the minimal sequence [KR]-X-[KR]-R. The R-peptide is released from the C-terminus of the cytoplasmic tail of the TM protein upon particle formation as a result of proteolytic cleavage by the viral protease. Cleavage of this peptide is required for TM to become fusogenic. Post-translationally, the CXXC motif is highly conserved across a broad range of retroviral envelope proteins. It is thought to participate in the formation of a labile disulfide bond possibly with the CX6CC motif present in the transmembrane protein. Isomerization of the intersubunit disulfide bond to an SU intrachain disulfide bond is thought to occur upon receptor recognition in order to allow membrane fusion. In terms of processing, the transmembrane protein is palmitoylated. The R-peptide is palmitoylated.

It is found in the virion membrane. It localises to the host cell membrane. Its function is as follows. The surface protein (SU) attaches the virus to the host cell by binding to its receptor. This interaction triggers the refolding of the transmembrane protein (TM) and is thought to activate its fusogenic potential by unmasking its fusion peptide. Fusion occurs at the host cell plasma membrane. In terms of biological role, the transmembrane protein (TM) acts as a class I viral fusion protein. Under the current model, the protein has at least 3 conformational states: pre-fusion native state, pre-hairpin intermediate state, and post-fusion hairpin state. During viral and target cell membrane fusion, the coiled coil regions (heptad repeats) assume a trimer-of-hairpins structure, positioning the fusion peptide in close proximity to the C-terminal region of the ectodomain. The formation of this structure appears to drive apposition and subsequent fusion of viral and target cell membranes. Membranes fusion leads to delivery of the nucleocapsid into the cytoplasm. The protein is Envelope glycoprotein (env) of Felidae (cat family).